Consider the following 532-residue polypeptide: T-complex protein 1 subunit epsilon (532 aa).

The protein belongs to the TCP-1 chaperonin family. In terms of assembly, component of the T-complex protein 1 (TCP1) complex.

It is found in the cytoplasm. Its function is as follows. Molecular chaperone; assists the folding of proteins upon ATP hydrolysis. This chain is T-complex protein 1 subunit epsilon (CCT5), found in Encephalitozoon cuniculi (strain GB-M1) (Microsporidian parasite).